The chain runs to 536 residues: Chlorophyllide a oxygenase, chloroplastic (536 aa).

A chloroplast-targeting transit peptide spans 1–36 (MNAAVFSPSALSLPISFSKTRSSFLSRKKGVKGEFR). Positions 123–150 (IGTVKKELAGLQEELSKAHQQVHISEAR) form a coiled coil. Positions 221 to 321 (WYPVAFTADL…CLEQEGMIWI (101 aa)) constitute a Rieske domain. Residues Cys-262, His-264, Cys-281, and His-284 each contribute to the [2Fe-2S] cluster site. Residues Asp-360, Asp-364, His-367, and His-372 each contribute to the Fe cation site.

The protein resides in the plastid. It is found in the chloroplast membrane. Its subcellular location is the chloroplast thylakoid membrane. It carries out the reaction chlorophyllide a + 2 NADPH + 2 O2 + 2 H(+) = chlorophyllide b + 2 NADP(+) + 3 H2O. Its pathway is porphyrin-containing compound metabolism; chlorophyll biosynthesis. Catalyzes a two-step oxygenase reaction involved in the synthesis of chlorophyll b. Acts specifically on the non-esterified chlorophyllide a and not on chlorophyll a. The chain is Chlorophyllide a oxygenase, chloroplastic (CAO) from Arabidopsis thaliana (Mouse-ear cress).